The chain runs to 21 residues: Tricyclic peptide MS-271 (21 aa).

Positions 1–9 form a cross-link, 3-cysteinyl-aspartic acid (Cys-Asp); it reads CLGVGSCND. 2 cysteine pairs are disulfide-bonded: Cys-1–Cys-13 and Cys-7–Cys-19. Trp-21 carries the D-tryptophan modification.

Inhibits chicken myosin light chain kinase with an IC(50) of 8 M. Does not inhibit bovine cAMP-dependent protein kinase or rat protein kinase C. Antibacterial activity against the Gram-positive bacteria B.subtilis, E.faecium and S.aureus. No antibacterial activity against the Gram-negative bacteria E.coli, K.pneumoniae, P.aeruginosa, P.vulgaris, S.sonnei and S.typhosa. No antifungal activity against C.albicans. This Streptomyces sp protein is Tricyclic peptide MS-271.